Consider the following 501-residue polypeptide: Bifunctional purine biosynthesis protein PurH (501 aa).

Residues 1–144 (MKKRALISVF…KNFKDVVVLS (144 aa)) enclose the MGS-like domain.

The protein belongs to the PurH family.

It carries out the reaction (6R)-10-formyltetrahydrofolate + 5-amino-1-(5-phospho-beta-D-ribosyl)imidazole-4-carboxamide = 5-formamido-1-(5-phospho-D-ribosyl)imidazole-4-carboxamide + (6S)-5,6,7,8-tetrahydrofolate. It catalyses the reaction IMP + H2O = 5-formamido-1-(5-phospho-D-ribosyl)imidazole-4-carboxamide. The protein operates within purine metabolism; IMP biosynthesis via de novo pathway; 5-formamido-1-(5-phospho-D-ribosyl)imidazole-4-carboxamide from 5-amino-1-(5-phospho-D-ribosyl)imidazole-4-carboxamide (10-formyl THF route): step 1/1. It participates in purine metabolism; IMP biosynthesis via de novo pathway; IMP from 5-formamido-1-(5-phospho-D-ribosyl)imidazole-4-carboxamide: step 1/1. The polypeptide is Bifunctional purine biosynthesis protein PurH (Clostridium perfringens (strain 13 / Type A)).